The chain runs to 79 residues: Translational regulator CsrA (79 aa).

This sequence belongs to the CsrA/RsmA family. In terms of assembly, homodimer; the beta-strands of each monomer intercalate to form a hydrophobic core, while the alpha-helices form wings that extend away from the core.

Its subcellular location is the cytoplasm. A translational regulator that binds mRNA to regulate translation initiation and/or mRNA stability. Usually binds in the 5'-UTR at or near the Shine-Dalgarno sequence preventing ribosome-binding, thus repressing translation. Its main target seems to be the major flagellin gene, while its function is anatagonized by FliW. In Helicobacter hepaticus (strain ATCC 51449 / 3B1), this protein is Translational regulator CsrA.